Consider the following 506-residue polypeptide: Probable UTP--glucose-1-phosphate uridylyltransferase (506 aa).

Serine 15 and serine 17 each carry phosphoserine. Residues 115-118 (LNGG), lysine 129, glutamine 192, and glycine 221 each bind UTP. 117-118 (GG) provides a ligand contact to substrate. Residue lysine 129 coordinates Mg(2+). Substrate contacts are provided by residues histidine 222 and 250–252 (NID). 2 residues coordinate UTP: aspartate 252 and lysine 394. A Mg(2+)-binding site is contributed by aspartate 252. The active site involves lysine 394. An oligomerization region spans residues 455 to 506 (HLTITGDVNIGRNVTLKGTVIIVASDANRIDIPNGSVLENCVITGNLNILEH).

The protein belongs to the UDPGP type 1 family. Homooctamer.

The protein resides in the cytoplasm. The protein localises to the nucleus. It catalyses the reaction alpha-D-glucose 1-phosphate + UTP + H(+) = UDP-alpha-D-glucose + diphosphate. Its function is as follows. Plays a central role as a glucosyl donor in cellular metabolic pathways. This is Probable UTP--glucose-1-phosphate uridylyltransferase (fyu1) from Schizosaccharomyces pombe (strain 972 / ATCC 24843) (Fission yeast).